The sequence spans 447 residues: Methylenetetrahydrofolate--tRNA-(uracil-5-)-methyltransferase TrmFO (447 aa).

10-15 (GAGLAG) lines the FAD pocket.

The protein belongs to the MnmG family. TrmFO subfamily. It depends on FAD as a cofactor.

The protein localises to the cytoplasm. It carries out the reaction uridine(54) in tRNA + (6R)-5,10-methylene-5,6,7,8-tetrahydrofolate + NADH + H(+) = 5-methyluridine(54) in tRNA + (6S)-5,6,7,8-tetrahydrofolate + NAD(+). It catalyses the reaction uridine(54) in tRNA + (6R)-5,10-methylene-5,6,7,8-tetrahydrofolate + NADPH + H(+) = 5-methyluridine(54) in tRNA + (6S)-5,6,7,8-tetrahydrofolate + NADP(+). Functionally, catalyzes the folate-dependent formation of 5-methyl-uridine at position 54 (M-5-U54) in all tRNAs. This Symbiobacterium thermophilum (strain DSM 24528 / JCM 14929 / IAM 14863 / T) protein is Methylenetetrahydrofolate--tRNA-(uracil-5-)-methyltransferase TrmFO.